The chain runs to 185 residues: ATP-dependent protease subunit HslV (185 aa).

T13 is an active-site residue. Residues G167, C170, and T173 each coordinate Na(+).

It belongs to the peptidase T1B family. HslV subfamily. In terms of assembly, a double ring-shaped homohexamer of HslV is capped on each side by a ring-shaped HslU homohexamer. The assembly of the HslU/HslV complex is dependent on binding of ATP.

It is found in the cytoplasm. The catalysed reaction is ATP-dependent cleavage of peptide bonds with broad specificity.. With respect to regulation, allosterically activated by HslU binding. Its function is as follows. Protease subunit of a proteasome-like degradation complex believed to be a general protein degrading machinery. This chain is ATP-dependent protease subunit HslV, found in Sinorhizobium medicae (strain WSM419) (Ensifer medicae).